Consider the following 908-residue polypeptide: Flap endonuclease GEN homolog 1 (908 aa).

An XPG-N domain region spans residues 2–96; it reads GVNDLWQILE…SKRNQSRYGS (95 aa). Residues Asp30, Glu75, Glu134, Glu136, Asp155, Asp157, and Asp208 each coordinate Mg(2+). The XPG-I domain stretch occupies residues 122–208; it reads ECLGIPWVQA…VGLAILLGCD (87 aa). A 5'-3' exonuclease domain region spans residues 208–384; that stretch reads DYLPKGVPGV…LLVLLTHYDM (177 aa). The chromodomain stretch occupies residues 390 to 464; sequence GSRNSNQLQP…VYQKQKLEIK (75 aa). 2 positions are modified to phosphoserine: Ser801 and Ser802.

The protein belongs to the XPG/RAD2 endonuclease family. GEN subfamily. As to quaternary structure, largely monomeric, dimerizes on the Holliday junction and the first nick occurs upon dimerization at the junction. The cofactor is Mg(2+).

The protein resides in the nucleus. In terms of biological role, endonuclease which resolves Holliday junctions (HJs) by the introduction of symmetrically related cuts across the junction point, to produce nicked duplex products in which the nicks can be readily ligated. Four-way DNA intermediates, also known as Holliday junctions, are formed during homologous recombination and DNA repair, and their resolution is necessary for proper chromosome segregation. Cleaves HJs by a nick and counter-nick mechanism involving dual coordinated incisions that lead to the formation of ligatable nicked duplex products. Cleavage of the first strand is rate limiting, while second strand cleavage is rapid. Largely monomeric, dimerizes on the HJ and the first nick occurs upon dimerization at the junction. Efficiently cleaves both single and double HJs contained within large recombination intermediates. Exhibits a weak sequence preference for incision between two G residues that reside in a T-rich region of DNA. Also has endonuclease activity on 5'-flap and replication fork (RF) DNA substrates. The protein is Flap endonuclease GEN homolog 1 (GEN1) of Homo sapiens (Human).